Here is a 123-residue protein sequence, read N- to C-terminus: uncharacterized protein (123 aa).

The protein to insertion element IS1016 transposase.

This is an uncharacterized protein from Haemophilus influenzae (strain ATCC 51907 / DSM 11121 / KW20 / Rd).